Here is a 652-residue protein sequence, read N- to C-terminus: ATP-dependent zinc metalloprotease FtsH (652 aa).

Residues 1-11 (MKKQNNGLIKN) lie on the Cytoplasmic side of the membrane. The chain crosses the membrane as a helical span at residues 12–32 (PFLWLLFIFFLVTGFQYFYSG). At 33 to 131 (NNSGGSQQIN…EVTVKHESSS (99 aa)) the chain is on the extracellular side. A helical membrane pass occupies residues 132 to 152 (GIWINLLVSIVPFGILFFFLF). The Cytoplasmic portion of the chain corresponds to 153–652 (SMMGNMGGGN…EVKSKMNDEK (500 aa)). 227 to 234 (GPPGTGKT) contacts ATP. His449 serves as a coordination point for Zn(2+). Glu450 is a catalytic residue. His453 and Asp525 together coordinate Zn(2+). Residues 628–652 (MPEAVEEESHALSYDEVKSKMNDEK) are disordered. The segment covering 634-652 (EESHALSYDEVKSKMNDEK) has biased composition (basic and acidic residues).

In the central section; belongs to the AAA ATPase family. This sequence in the C-terminal section; belongs to the peptidase M41 family. As to quaternary structure, homohexamer. Zn(2+) serves as cofactor.

It is found in the cell membrane. Acts as a processive, ATP-dependent zinc metallopeptidase for both cytoplasmic and membrane proteins. Plays a role in the quality control of integral membrane proteins. The protein is ATP-dependent zinc metalloprotease FtsH of Streptococcus pneumoniae serotype 4 (strain ATCC BAA-334 / TIGR4).